Consider the following 359-residue polypeptide: Outer membrane protein assembly factor BamC (359 aa).

A signal peptide spans 1 to 34 (MASLFDKNSFQMTRLQKTAVAKVVGVSLIMLLAA). Cysteine 35 carries N-palmitoyl cysteine lipidation. A lipid anchor (S-diacylglycerol cysteine) is attached at cysteine 35.

This sequence belongs to the BamC family. As to quaternary structure, part of the Bam complex, which is composed of the outer membrane protein BamA, and four lipoproteins BamB, BamC, BamD and BamE.

It is found in the cell outer membrane. Functionally, part of the outer membrane protein assembly complex, which is involved in assembly and insertion of beta-barrel proteins into the outer membrane. In Rahnella sp. (strain Y9602), this protein is Outer membrane protein assembly factor BamC.